Reading from the N-terminus, the 83-residue chain is MGMSPLTVKKLGFIFMIVSASALSVSFAGRPSIFVHKKINLREEMVERSMHEHERLLRMNTKDYGNNSPSPRLERPPFKLIPN.

Positions 1 to 22 (MGMSPLTVKKLGFIFMIVSASA) are cleaved as a signal peptide. The tract at residues 59–83 (MNTKDYGNNSPSPRLERPPFKLIPN) is disordered. A Sulfotyrosine modification is found at Y64. A hydroxyproline mark is found at P69 and P71.

Interacts with the specific receptor kinases GSO1 and GSO2. In terms of tissue distribution, expressed exclusively in the root stele.

Peptide hormone required for contiguous Casparian strip diffusion barrier formation in roots via the regulation of CASPs protein expression and distribution in a GSO1-GSO2 signaling pathway. The Casparian strip is required for ion homeostasis (e.g. iron and potassium ions). The chain is Protein CASPARIAN STRIP INTEGRITY FACTOR 1 from Arabidopsis thaliana (Mouse-ear cress).